Reading from the N-terminus, the 251-residue chain is Hydroxyacylglutathione hydrolase (251 aa).

Zn(2+) contacts are provided by H59, H61, D63, H64, H118, D141, and H179.

The protein belongs to the metallo-beta-lactamase superfamily. Glyoxalase II family. In terms of assembly, monomer. Zn(2+) is required as a cofactor.

It catalyses the reaction an S-(2-hydroxyacyl)glutathione + H2O = a 2-hydroxy carboxylate + glutathione + H(+). The protein operates within secondary metabolite metabolism; methylglyoxal degradation; (R)-lactate from methylglyoxal: step 2/2. In terms of biological role, thiolesterase that catalyzes the hydrolysis of S-D-lactoyl-glutathione to form glutathione and D-lactic acid. This chain is Hydroxyacylglutathione hydrolase, found in Prochlorococcus marinus (strain NATL1A).